A 488-amino-acid polypeptide reads, in one-letter code: BTB/POZ domain-containing protein 1 (488 aa).

The span at methionine 1 to glutamate 19 shows a compositional bias: low complexity. The segment at methionine 1–proline 42 is disordered. A compositionally biased stretch (pro residues) spans proline 20 to serine 36. The 77-residue stretch at serine 75–proline 151 folds into the BTB domain. Arginine 85 is modified (omega-N-methylarginine). One can recognise a BACK domain in the interval leucine 190–glutamate 290.

In terms of assembly, interacts (via C-terminus) with TOP1. Interacts with TRIM5 isoform Delta. Interacts with CUL3. In terms of tissue distribution, strongly expressed in heart and skeletal muscle. Weakly expressed in myoblast C2C12 cells, but strongly up-regulated upon their differentiation into myotubes.

The protein localises to the cytoplasm. It participates in protein modification; protein ubiquitination. In terms of biological role, probable substrate-specific adapter of an E3 ubiquitin-protein ligase complex which mediates the ubiquitination and subsequent proteasomal degradation of target proteins. Seems to regulate expression levels and/or subnuclear distribution of TOP1, via an unknown mechanism. May play a role in mesenchymal differentiation where it promotes myogenic differentiation and suppresses adipogenesis. This Mus musculus (Mouse) protein is BTB/POZ domain-containing protein 1 (Btbd1).